Here is a 279-residue protein sequence, read N- to C-terminus: NAD kinase (279 aa).

The active-site Proton acceptor is aspartate 57. NAD(+) is bound by residues 57-58, 133-134, arginine 159, aspartate 161, and 172-177; these read DG, NE, and TAYNKS.

The protein belongs to the NAD kinase family. The cofactor is a divalent metal cation.

It is found in the cytoplasm. It carries out the reaction NAD(+) + ATP = ADP + NADP(+) + H(+). Functionally, involved in the regulation of the intracellular balance of NAD and NADP, and is a key enzyme in the biosynthesis of NADP. Catalyzes specifically the phosphorylation on 2'-hydroxyl of the adenosine moiety of NAD to yield NADP. In Streptococcus pyogenes serotype M2 (strain MGAS10270), this protein is NAD kinase.